The primary structure comprises 226 residues: Adenosine 5'-phosphosulfate reductase (226 aa).

Residues C112, C113, C195, and C198 each coordinate [4Fe-4S] cluster. C221 (nucleophile; cysteine thiosulfonate intermediate) is an active-site residue.

This sequence belongs to the PAPS reductase family. CysH subfamily. [4Fe-4S] cluster is required as a cofactor.

The protein resides in the cytoplasm. It catalyses the reaction [thioredoxin]-disulfide + sulfite + AMP + 2 H(+) = adenosine 5'-phosphosulfate + [thioredoxin]-dithiol. It participates in sulfur metabolism; hydrogen sulfide biosynthesis; sulfite from sulfate. In terms of biological role, catalyzes the formation of sulfite from adenosine 5'-phosphosulfate (APS) using thioredoxin as an electron donor. In Bacillus anthracis (strain A0248), this protein is Adenosine 5'-phosphosulfate reductase.